We begin with the raw amino-acid sequence, 138 residues long: Lactoylglutathione lyase (138 aa).

Positions 2–126 (RLLHTMLRVG…DGYKIEFIQK (125 aa)) constitute a VOC domain. Position 5 (His5) interacts with Ni(2+). Residue Arg9 coordinates substrate. Glu56 is a Ni(2+) binding site. Substrate is bound by residues Asn60 and His74. Residues His74 and Glu122 each coordinate Ni(2+). Glu122 acts as the Proton donor/acceptor in catalysis.

It belongs to the glyoxalase I family. The cofactor is Ni(2+).

The enzyme catalyses (R)-S-lactoylglutathione = methylglyoxal + glutathione. The protein operates within secondary metabolite metabolism; methylglyoxal degradation; (R)-lactate from methylglyoxal: step 1/2. Catalyzes the conversion of hemimercaptal, formed from methylglyoxal and glutathione, to S-lactoylglutathione. This Neisseria meningitidis serogroup A / serotype 4A (strain DSM 15465 / Z2491) protein is Lactoylglutathione lyase (gloA).